We begin with the raw amino-acid sequence, 186 residues long: MDKNSRYTVDSSILFRQWLNDTREMVQDTIFHSRIQKKNNNHPVSQRVFFEQNAHSHYFSYRNNKNLFKENPVSYIRHQSLYNVLKNLKKGRYNPDISIDLHGLTQHQAQQALGELITTCQKEKIFCAHIMHGHGKHILKKQTPFWLSQHPDIIAFHEAPKFFGSDAAIIVIIEINSLKKNINIFN.

Residues 99–174 (IDLHGLTQHQ…SDAAIIVIIE (76 aa)) form the Smr domain.

The protein belongs to the SmrB family. As to quaternary structure, associates with collided ribosomes, but not with correctly translating polysomes.

Its function is as follows. Acts as a ribosome collision sensor. Detects stalled/collided disomes (pairs of ribosomes where the leading ribosome is stalled and a second ribosome has collided with it) and endonucleolytically cleaves mRNA at the 5' boundary of the stalled ribosome. Stalled/collided disomes form a new interface (primarily via the 30S subunits) that binds SmrB. Cleaved mRNA becomes available for tmRNA ligation, leading to ribosomal subunit dissociation and rescue of stalled ribosomes. In Buchnera aphidicola subsp. Acyrthosiphon pisum (strain 5A), this protein is Ribosome rescue factor SmrB.